The sequence spans 404 residues: Cysteine desulfurase IscS (404 aa).

Pyridoxal 5'-phosphate-binding positions include 75–76 (AT), Asn155, Gln183, and 203–205 (SGH). Lys206 bears the N6-(pyridoxal phosphate)lysine mark. Pyridoxal 5'-phosphate is bound at residue Thr243. The Cysteine persulfide intermediate role is filled by Cys328. A [2Fe-2S] cluster-binding site is contributed by Cys328.

Belongs to the class-V pyridoxal-phosphate-dependent aminotransferase family. NifS/IscS subfamily. Homodimer. Forms a heterotetramer with IscU, interacts with other sulfur acceptors. Requires pyridoxal 5'-phosphate as cofactor.

The protein resides in the cytoplasm. The catalysed reaction is (sulfur carrier)-H + L-cysteine = (sulfur carrier)-SH + L-alanine. The protein operates within cofactor biosynthesis; iron-sulfur cluster biosynthesis. Master enzyme that delivers sulfur to a number of partners involved in Fe-S cluster assembly, tRNA modification or cofactor biosynthesis. Catalyzes the removal of elemental sulfur atoms from cysteine to produce alanine. Functions as a sulfur delivery protein for Fe-S cluster synthesis onto IscU, an Fe-S scaffold assembly protein, as well as other S acceptor proteins. The chain is Cysteine desulfurase IscS from Shewanella baltica (strain OS155 / ATCC BAA-1091).